Reading from the N-terminus, the 59-residue chain is Eag protein (59 aa).

The polypeptide is Eag protein (eag) (Salmonella phage P22 (Bacteriophage P22)).